Here is an 84-residue protein sequence, read N- to C-terminus: Large ribosomal subunit protein bL27 (84 aa).

It belongs to the bacterial ribosomal protein bL27 family.

The protein is Large ribosomal subunit protein bL27 of Buchnera aphidicola subsp. Acyrthosiphon pisum (strain Tuc7).